We begin with the raw amino-acid sequence, 312 residues long: Homoserine kinase (312 aa).

Residue 91–101 (PVASGLGSSAC) participates in ATP binding.

This sequence belongs to the GHMP kinase family. Homoserine kinase subfamily.

Its subcellular location is the cytoplasm. It carries out the reaction L-homoserine + ATP = O-phospho-L-homoserine + ADP + H(+). Its pathway is amino-acid biosynthesis; L-threonine biosynthesis; L-threonine from L-aspartate: step 4/5. Catalyzes the ATP-dependent phosphorylation of L-homoserine to L-homoserine phosphate. The polypeptide is Homoserine kinase (Blochmanniella pennsylvanica (strain BPEN)).